A 918-amino-acid polypeptide reads, in one-letter code: Isoleucine--tRNA ligase 1 (918 aa).

The 'HIGH' region signature appears at 57–67; it reads PYANGDIHIGH. An L-isoleucyl-5'-AMP-binding site is contributed by Glu-553. A 'KMSKS' region motif is present at residues 594–598; it reads KMSKS. Lys-597 contributes to the ATP binding site. The Zn(2+) site is built by Cys-885, Cys-888, Cys-905, and Cys-908.

It belongs to the class-I aminoacyl-tRNA synthetase family. IleS type 1 subfamily. In terms of assembly, monomer. Zn(2+) is required as a cofactor.

Its subcellular location is the cytoplasm. The enzyme catalyses tRNA(Ile) + L-isoleucine + ATP = L-isoleucyl-tRNA(Ile) + AMP + diphosphate. Catalyzes the attachment of isoleucine to tRNA(Ile). As IleRS can inadvertently accommodate and process structurally similar amino acids such as valine, to avoid such errors it has two additional distinct tRNA(Ile)-dependent editing activities. One activity is designated as 'pretransfer' editing and involves the hydrolysis of activated Val-AMP. The other activity is designated 'posttransfer' editing and involves deacylation of mischarged Val-tRNA(Ile). This is Isoleucine--tRNA ligase 1 from Oceanobacillus iheyensis (strain DSM 14371 / CIP 107618 / JCM 11309 / KCTC 3954 / HTE831).